A 185-amino-acid chain; its full sequence is Peptidyl-tRNA hydrolase (185 aa).

Tyr14 serves as a coordination point for tRNA. The Proton acceptor role is filled by His19. Tyr64, Asn66, and Asn112 together coordinate tRNA.

The protein belongs to the PTH family. In terms of assembly, monomer.

It localises to the cytoplasm. The catalysed reaction is an N-acyl-L-alpha-aminoacyl-tRNA + H2O = an N-acyl-L-amino acid + a tRNA + H(+). In terms of biological role, hydrolyzes ribosome-free peptidyl-tRNAs (with 1 or more amino acids incorporated), which drop off the ribosome during protein synthesis, or as a result of ribosome stalling. Functionally, catalyzes the release of premature peptidyl moieties from peptidyl-tRNA molecules trapped in stalled 50S ribosomal subunits, and thus maintains levels of free tRNAs and 50S ribosomes. The protein is Peptidyl-tRNA hydrolase of Pediococcus pentosaceus (strain ATCC 25745 / CCUG 21536 / LMG 10740 / 183-1w).